Here is a 792-residue protein sequence, read N- to C-terminus: Ribonucleoside-diphosphate reductase large subunit (792 aa).

Substrate-binding positions include T200, 215 to 216 (SC), G246, 415 to 419 (NLCAE), and 606 to 610 (PTAGT). C216 and C431 are oxidised to a cystine. Catalysis depends on N415, which acts as the Proton acceptor. The active-site Cysteine radical intermediate is C417. Catalysis depends on E419, which acts as the Proton acceptor. A disordered region spans residues 758-781 (SPPHSGMKQDGAWLPGPKNPEEES).

This sequence belongs to the ribonucleoside diphosphate reductase large chain family. Heterotetramer composed of a homodimer of the large subunit (R1) and a homodimer of the small subunit (R2). Larger multisubunit protein complex are also active, composed of (R1)n(R2)n.

It carries out the reaction a 2'-deoxyribonucleoside 5'-diphosphate + [thioredoxin]-disulfide + H2O = a ribonucleoside 5'-diphosphate + [thioredoxin]-dithiol. In terms of biological role, ribonucleoside-diphosphate reductase holoenzyme provides the precursors necessary for viral DNA synthesis. Allows virus growth in non-dividing cells, as well as reactivation from latency in infected hosts. Catalyzes the biosynthesis of deoxyribonucleotides from the corresponding ribonucleotides. This Human herpesvirus 8 type P (isolate GK18) (HHV-8) protein is Ribonucleoside-diphosphate reductase large subunit.